The sequence spans 180 residues: Large ribosomal subunit protein eL20 (180 aa).

The protein belongs to the eukaryotic ribosomal protein eL20 family.

This chain is Large ribosomal subunit protein eL20, found in Caenorhabditis elegans.